The sequence spans 426 residues: Adenylosuccinate synthetase (426 aa).

GTP is bound by residues 12–18 (GDEGKGK) and 40–42 (GHT). The active-site Proton acceptor is the D13. Residues D13 and G40 each contribute to the Mg(2+) site. IMP contacts are provided by residues 13–16 (DEGK), 38–41 (NAGH), T131, R145, Q226, T241, and R305. Residue H41 is the Proton donor of the active site. 301–307 (ATTGRKR) contributes to the substrate binding site. Residues R307, 333-335 (KLD), and 415-417 (SVG) contribute to the GTP site.

This sequence belongs to the adenylosuccinate synthetase family. Homodimer. Mg(2+) is required as a cofactor.

It is found in the cytoplasm. It catalyses the reaction IMP + L-aspartate + GTP = N(6)-(1,2-dicarboxyethyl)-AMP + GDP + phosphate + 2 H(+). The protein operates within purine metabolism; AMP biosynthesis via de novo pathway; AMP from IMP: step 1/2. In terms of biological role, plays an important role in the de novo pathway of purine nucleotide biosynthesis. Catalyzes the first committed step in the biosynthesis of AMP from IMP. This chain is Adenylosuccinate synthetase, found in Nitratidesulfovibrio vulgaris (strain DP4) (Desulfovibrio vulgaris).